The sequence spans 81 residues: MKLIDLAKNIARELKEADEKYIIINGKKERILAIEIVQITSMPRFQIVTEKGTVLILTPSQFLRKKYELIKNGEKKSFFGV.

This is an uncharacterized protein from Sulfolobus islandicus filamentous virus (isolate Iceland/Hveragerdi) (SIFV).